The primary structure comprises 834 residues: Enhancer of filamentation 1 (834 aa).

Residues Met-1 to Asp-505 form a required for interaction with ITCH region. Residues Tyr-3–Gly-65 enclose the SH3 domain. 7 positions are modified to phosphotyrosine; by ABL1: Tyr-92, Tyr-164, Tyr-166, Tyr-177, Tyr-189, Tyr-214, and Tyr-223. The interval Arg-102–Ala-229 is interacts strongly with spindle-regulatory protein D1M1. Residues Glu-238–Val-260 form a disordered region. Tyr-279 bears the Phosphotyrosine; by ABL1 mark. A disordered region spans residues Ala-291–Ala-316. Ser-296 carries the post-translational modification Phosphoserine. Polar residues predominate over residues Leu-306–Asp-315. Tyr-317 carries the post-translational modification Phosphotyrosine; by ABL1. Disordered regions lie at residues Pro-328–Gln-398 and Gly-560–Arg-623. Residues Thr-332–Val-344 show a composition bias toward basic and acidic residues. The tract at residues Asn-351–Phe-834 is interacts with CTTN. Residues Asp-360–Asp-363 carry the Caspase cleavage related site motif. At Ser-369 the chain carries Phosphoserine. Residues Ser-369–Ser-395 show a composition bias toward low complexity. Positions Phe-710 to Gly-760 are divergent helix-loop-helix motif. The tract at residues Phe-710–Phe-834 is required for interaction with PLK1. Phosphoserine; by CSNK1D and CSNK1E is present on Ser-780. Residue Thr-804 is modified to Phosphothreonine; by CSNK1E.

Belongs to the CAS family. In terms of assembly, homodimer. Forms heterodimers with BCAR1/p130cas. Forms complexes with PTK2B/RAFTK, adapter protein CRKL and LYN kinase. Part of a complex composed of NEDD9, AURKA and CTTN; within the complex NEDD9 acts as a scaffold protein and is required for complex formation. Part of a ternary complex composed of SMAD3, ITCH/AIP4 and NEDD9/HEF1; within the complex NEDD9/HEF1 interacts (via N-terminus) with ITCH/AIP4 (via WW domains); the complex mediates ubiquitination and proteasomal degradation of NEDD9/HEF1. Interacts with SMAD3; the interaction promotes NEDD9 ubiquitination and proteasomal degradation. Interacts with ID2. Interacts with CTTN (via N-terminus). Interacts with MICAL. Interacts with TXNL4/DIM1. Interacts with BCAR3 (via Ras-GEF domain). Interacts with SH2D3C isoform 1 and isoform 2. Interacts with ECT2. Interacts with PTPN11/SHP-2 (via SH2 domains); the interaction is enhanced when NEDD9/CAS-L is tyrosine phosphorylated. Interacts (via C-terminus) with PLK1 (via polo box domains). Interacts with NKX2-5. Interacts with SMAD3; the interaction is inhibited by oxidation of NEDD9. Interacts with NEDD9/HEF1; interaction is induced by CXCL12 promotion of ABL-mediated phosphorylation of NEDD9/HEF1. Interacts (via SH3 domain) with PTK2/FAK. Interacts with FYN; in the presence of PTK2. Interacts with INPPL1/SHIP2. Cell cycle-regulated processing produces four isoforms: p115, p105, p65, and p55. Isoform p115 arises from p105 phosphorylation and appears later in the cell cycle. Isoform p55 arises from p105 as a result of cleavage at a caspase cleavage-related site and it appears specifically at mitosis. The p65 isoform is poorly detected. Post-translationally, polyubiquitinated by ITCH/AIP4, leading to proteasomal degradation. In terms of processing, PTK2/FAK1 phosphorylates the protein at the YDYVHL motif (conserved among all cas proteins) following integrin stimulation. The SRC family kinases (FYN, SRC, LCK and CRK) are recruited to the phosphorylated sites and can phosphorylate other tyrosine residues. Ligation of either integrin beta-1 or B-cell antigen receptor on tonsillar B-cells and B-cell lines promotes tyrosine phosphorylation and both integrin and BCR-mediated tyrosine phosphorylation requires an intact actin network. Phosphorylation is required to recruit NEDD9 to T-cell receptor microclusters at the periphery of newly formed immunological synapses. In fibroblasts transformation with oncogene v-ABL results in an increase in tyrosine phosphorylation. Transiently phosphorylated following CD3 cross-linking and this phosphorylated form binds to CRKL and C3G. A mutant lacking the SH3 domain is phosphorylated upon CD3 cross-linking but not upon integrin beta-1 cross-linking. Tyrosine phosphorylation occurs upon stimulation of the G-protein coupled C1a calcitonin receptor. Calcitonin-stimulated tyrosine phosphorylation is mediated by calcium- and protein kinase C-dependent mechanisms and requires the integrity of the actin cytoskeleton. Phosphorylation at Ser-369 induces proteasomal degradation. Phosphorylated by LYN. Phosphorylation at Ser-780 by CSNK1D or CSNK1E, or phosphorylation of Thr-804 by CSNK1E enhances the interaction of NEDD9 with PLK1. In terms of tissue distribution, expressed in B-cells (at protein level). Expressed in the respiratory epithelium of the main bronchi to the bronchioles in the lungs (at protein level). High levels detected in kidney, lung, and placenta. Expressed in lymphocytes.

It localises to the cytoplasm. The protein resides in the cell cortex. It is found in the nucleus. The protein localises to the golgi apparatus. Its subcellular location is the cell projection. It localises to the lamellipodium. The protein resides in the cell junction. It is found in the focal adhesion. The protein localises to the cytoskeleton. Its subcellular location is the spindle pole. It localises to the cilium. The protein resides in the cilium basal body. It is found in the basolateral cell membrane. The protein localises to the spindle. Scaffolding protein which plays a central coordinating role for tyrosine-kinase-based signaling related to cell adhesion. As a focal adhesion protein, plays a role in embryonic fibroblast migration. May play an important role in integrin beta-1 or B cell antigen receptor (BCR) mediated signaling in B- and T-cells. Integrin beta-1 stimulation leads to recruitment of various proteins including CRKL and SHPTP2 to the tyrosine phosphorylated form. Promotes adhesion and migration of lymphocytes; as a result required for the correct migration of lymphocytes to the spleen and other secondary lymphoid organs. Plays a role in the organization of T-cell F-actin cortical cytoskeleton and the centralization of T-cell receptor microclusters at the immunological synapse. Negatively regulates cilia outgrowth in polarized cysts. Modulates cilia disassembly via activation of AURKA-mediated phosphorylation of HDAC6 and subsequent deacetylation of alpha-tubulin. Positively regulates RANKL-induced osteoclastogenesis. Required for the maintenance of hippocampal dendritic spines in the dentate gyrus and CA1 regions, thereby involved in spatial learning and memory. The sequence is that of Enhancer of filamentation 1 from Homo sapiens (Human).